We begin with the raw amino-acid sequence, 324 residues long: Protein translocase subunit SecF (324 aa).

The next 6 helical transmembrane spans lie at 16 to 36, 145 to 165, 174 to 194, 201 to 221, 247 to 269, and 276 to 295; these read FFWAAPVTFGFSVFLMAASLV, LIRSAILAVAAACAGIAVYIW, LGSVAALIHDVLVTIGVFALF, TTVAALLTVLGYSINDTVVVF, TLSRTIMTLMTTLIALVSLLVFG, and FVFAITFGVVIGTYSSVYMA.

The protein belongs to the SecD/SecF family. SecF subfamily. Forms a complex with SecD. Part of the essential Sec protein translocation apparatus which comprises SecA, SecYEG and auxiliary proteins SecDF-YajC and YidC.

The protein resides in the cell inner membrane. Its function is as follows. Part of the Sec protein translocase complex. Interacts with the SecYEG preprotein conducting channel. SecDF uses the proton motive force (PMF) to complete protein translocation after the ATP-dependent function of SecA. The protein is Protein translocase subunit SecF of Cereibacter sphaeroides (strain ATCC 17023 / DSM 158 / JCM 6121 / CCUG 31486 / LMG 2827 / NBRC 12203 / NCIMB 8253 / ATH 2.4.1.) (Rhodobacter sphaeroides).